A 238-amino-acid polypeptide reads, in one-letter code: NAD(P)H-hydrate epimerase (238 aa).

The 216-residue stretch at 10 to 225 (AIKVDQILFN…ALQRQYELNL (216 aa)) folds into the YjeF N-terminal domain. 68 to 72 (NNGGD) provides a ligand contact to (6S)-NADPHX. Residues Asn-69 and Asp-133 each contribute to the K(+) site. Residues 137–143 (GFSFKPP) and Asp-166 contribute to the (6S)-NADPHX site. Ser-169 is a K(+) binding site.

This sequence belongs to the NnrE/AIBP family. K(+) is required as a cofactor.

It catalyses the reaction (6R)-NADHX = (6S)-NADHX. The catalysed reaction is (6R)-NADPHX = (6S)-NADPHX. Catalyzes the epimerization of the S- and R-forms of NAD(P)HX, a damaged form of NAD(P)H that is a result of enzymatic or heat-dependent hydration. This is a prerequisite for the S-specific NAD(P)H-hydrate dehydratase to allow the repair of both epimers of NAD(P)HX. The sequence is that of NAD(P)H-hydrate epimerase from Drosophila willistoni (Fruit fly).